The sequence spans 161 residues: Large ribosomal subunit protein uL15 (161 aa).

Positions 1–43 (MKLSEISDNPGARKKRMRIGRGIGSGKGKTGGRGGKGQTARSG) are disordered. Gly residues predominate over residues 21–37 (RGIGSGKGKTGGRGGKG).

Belongs to the universal ribosomal protein uL15 family. Part of the 50S ribosomal subunit.

Binds to the 23S rRNA. The sequence is that of Large ribosomal subunit protein uL15 from Rhodopseudomonas palustris (strain HaA2).